The chain runs to 327 residues: Aspartate carbamoyltransferase catalytic subunit (327 aa).

Positions 73 and 74 each coordinate carbamoyl phosphate. Lys-101 contributes to the L-aspartate binding site. Residues Arg-123, His-153, and Gln-156 each contribute to the carbamoyl phosphate site. L-aspartate is bound by residues Arg-186 and Arg-241. Carbamoyl phosphate-binding residues include Gly-282 and Pro-283.

The protein belongs to the aspartate/ornithine carbamoyltransferase superfamily. ATCase family. As to quaternary structure, heterododecamer (2C3:3R2) of six catalytic PyrB chains organized as two trimers (C3), and six regulatory PyrI chains organized as three dimers (R2).

It catalyses the reaction carbamoyl phosphate + L-aspartate = N-carbamoyl-L-aspartate + phosphate + H(+). Its pathway is pyrimidine metabolism; UMP biosynthesis via de novo pathway; (S)-dihydroorotate from bicarbonate: step 2/3. Catalyzes the condensation of carbamoyl phosphate and aspartate to form carbamoyl aspartate and inorganic phosphate, the committed step in the de novo pyrimidine nucleotide biosynthesis pathway. The chain is Aspartate carbamoyltransferase catalytic subunit from Acidithiobacillus ferrooxidans (strain ATCC 23270 / DSM 14882 / CIP 104768 / NCIMB 8455) (Ferrobacillus ferrooxidans (strain ATCC 23270)).